A 210-amino-acid polypeptide reads, in one-letter code: N-(5'-phosphoribosyl)anthranilate isomerase (210 aa).

Belongs to the TrpF family.

It catalyses the reaction N-(5-phospho-beta-D-ribosyl)anthranilate = 1-(2-carboxyphenylamino)-1-deoxy-D-ribulose 5-phosphate. It functions in the pathway amino-acid biosynthesis; L-tryptophan biosynthesis; L-tryptophan from chorismate: step 3/5. The chain is N-(5'-phosphoribosyl)anthranilate isomerase from Pseudomonas fluorescens (strain SBW25).